A 537-amino-acid polypeptide reads, in one-letter code: Tyrosine-protein kinase Fyn (537 aa).

Glycine 2 is lipidated: N-myristoyl glycine. Residues cysteine 3 and cysteine 6 are each lipidated (S-palmitoyl cysteine). A Phosphothreonine; by PKC modification is found at threonine 12. 2 positions are modified to phosphoserine: serine 21 and serine 26. The region spanning 82-143 (TGVTLFVALY…PSNYVAPVDS (62 aa)) is the SH3 domain. The 98-residue stretch at 149–246 (WYFGKLGRKD…GLCCRLVVPC (98 aa)) folds into the SH2 domain. Tyrosine 185 is subject to Phosphotyrosine. The Protein kinase domain maps to 271 to 524 (LQLIKRLGNG…YLQGFLEDYF (254 aa)). ATP contacts are provided by residues 277–285 (LGNGQFGEV) and lysine 299. The active-site Proton acceptor is the aspartate 390. Tyrosine 420 carries the phosphotyrosine; by autocatalysis modification. Tyrosine 531 bears the Phosphotyrosine; by CSK mark.

Belongs to the protein kinase superfamily. Tyr protein kinase family. SRC subfamily. In terms of assembly, interacts (via its SH3 domain) with PIK3R1 and PRMT8. Interacts with FYB1, PAG1, and SH2D1A. Interacts with CD79A (tyrosine-phosphorylated form); the interaction increases FYN activity. Interacts (via SH2 domain) with CSF1R (tyrosine phosphorylated). Interacts with TOM1L1 (phosphorylated form). Interacts with KDR (tyrosine phosphorylated). Interacts (via SH3 domain) with KLHL2 (via N-terminus). Interacts with SH2D1A and SLAMF1. Interacts with ITCH; the interaction phosphorylates ITCH and negatively regulates its activity. Interacts with FASLG. Interacts with RUNX3. Interacts with KIT. Interacts with EPHA8; possible downstream effector of EPHA8 in regulation of cell adhesion. Interacts with PTK2/FAK1; this interaction leads to PTK2/FAK1 phosphorylation and activation. Interacts with CAV1; this interaction couples integrins to the Ras-ERK pathway. Interacts with UNC119. Interacts (via SH2 domain) with PTPRH (phosphorylated form). Interacts with PTPRO (phosphorylated form). Interacts with PTPRB (phosphorylated form). Interacts with FYB2. Interacts with DSCAM. Interacts with SKAP1 and FYB1; this interaction promotes the phosphorylation of CLNK. Interacts with NEDD9; in the presence of PTK2. It depends on Mn(2+) as a cofactor. Post-translationally, autophosphorylated at Tyr-420. Phosphorylation on the C-terminal tail at Tyr-531 by CSK maintains the enzyme in an inactive state. PTPRC/CD45 dephosphorylates Tyr-531 leading to activation. Ultraviolet B (UVB) strongly increase phosphorylation at Thr-12 and kinase activity, and promotes translocation from the cytoplasm to the nucleus. Dephosphorylation at Tyr-420 by PTPN2 negatively regulates T-cell receptor signaling. Phosphorylated at tyrosine residues, which can be enhanced by NTN1. Palmitoylated. Palmitoylation at Cys-3 and Cys-6, probably by ZDHHC21, regulates subcellular location.

Its subcellular location is the cytoplasm. The protein resides in the nucleus. The protein localises to the cell membrane. It localises to the perikaryon. It catalyses the reaction L-tyrosyl-[protein] + ATP = O-phospho-L-tyrosyl-[protein] + ADP + H(+). With respect to regulation, inhibited by phosphorylation of Tyr-531 by leukocyte common antigen and activated by dephosphorylation of this site. Functionally, non-receptor tyrosine-protein kinase that plays a role in many biological processes including regulation of cell growth and survival, cell adhesion, integrin-mediated signaling, cytoskeletal remodeling, cell motility, immune response and axon guidance. Inactive FYN is phosphorylated on its C-terminal tail within the catalytic domain. Following activation by PKA, the protein subsequently associates with PTK2/FAK1, allowing PTK2/FAK1 phosphorylation, activation and targeting to focal adhesions. Involved in the regulation of cell adhesion and motility through phosphorylation of CTNNB1 (beta-catenin) and CTNND1 (delta-catenin). Regulates cytoskeletal remodeling by phosphorylating several proteins including the actin regulator WAS and the microtubule-associated proteins MAP2 and MAPT. Promotes cell survival by phosphorylating AGAP2/PIKE-A and preventing its apoptotic cleavage. Participates in signal transduction pathways that regulate the integrity of the glomerular slit diaphragm (an essential part of the glomerular filter of the kidney) by phosphorylating several slit diaphragm components including NPHS1, KIRREL1 and TRPC6. Plays a role in neural processes by phosphorylating DPYSL2, a multifunctional adapter protein within the central nervous system, ARHGAP32, a regulator for Rho family GTPases implicated in various neural functions, and SNCA, a small pre-synaptic protein. Involved in reelin signaling by mediating phosphorylation of DAB1 following reelin (RELN)-binding to its receptor. Participates in the downstream signaling pathways that lead to T-cell differentiation and proliferation following T-cell receptor (TCR) stimulation. Phosphorylates PTK2B/PYK2 in response to T-cell receptor activation. Also participates in negative feedback regulation of TCR signaling through phosphorylation of PAG1, thereby promoting interaction between PAG1 and CSK and recruitment of CSK to lipid rafts. CSK maintains LCK and FYN in an inactive form. Promotes CD28-induced phosphorylation of VAV1. In mast cells, phosphorylates CLNK after activation of immunoglobulin epsilon receptor signaling. Can also promote CD244-mediated NK cell activation. This Sus scrofa (Pig) protein is Tyrosine-protein kinase Fyn.